The following is a 363-amino-acid chain: Chalcone synthase B (363 aa).

Cysteine 170 is a catalytic residue.

This sequence belongs to the thiolase-like superfamily. Chalcone/stilbene synthases family.

It carries out the reaction (E)-4-coumaroyl-CoA + 3 malonyl-CoA + 3 H(+) = 2',4,4',6'-tetrahydroxychalcone + 3 CO2 + 4 CoA. The protein operates within secondary metabolite biosynthesis; flavonoid biosynthesis. Its function is as follows. The primary product of this enzyme is 4,2',4',6'-tetrahydroxychalcone (also termed naringenin-chalcone or chalcone) which can under specific conditions spontaneously isomerize into naringenin. In Ipomoea nil (Japanese morning glory), this protein is Chalcone synthase B (CHSB).